Here is a 300-residue protein sequence, read N- to C-terminus: Ornithine carbamoyltransferase (300 aa).

Residues 51-54 (STRT), Gln-78, Arg-102, and 129-132 (HPCQ) each bind carbamoyl phosphate. Residues Asn-160, Asp-217, and 221 to 222 (SM) each bind L-ornithine. Residues 257-258 (CL) and Arg-285 each bind carbamoyl phosphate.

The protein belongs to the aspartate/ornithine carbamoyltransferase superfamily. OTCase family.

The protein resides in the cytoplasm. It catalyses the reaction carbamoyl phosphate + L-ornithine = L-citrulline + phosphate + H(+). It functions in the pathway amino-acid biosynthesis; L-arginine biosynthesis; L-arginine from L-ornithine and carbamoyl phosphate: step 1/3. Functionally, reversibly catalyzes the transfer of the carbamoyl group from carbamoyl phosphate (CP) to the N(epsilon) atom of ornithine (ORN) to produce L-citrulline. The polypeptide is Ornithine carbamoyltransferase (Halorhodospira halophila (strain DSM 244 / SL1) (Ectothiorhodospira halophila (strain DSM 244 / SL1))).